Consider the following 266-residue polypeptide: MNVNVPVPSTLADPLVIAGRTFSSRLFLGTAGYPNQKVFLDALEASGSEMATASIRRMSLEGYEESLADLLTGRVHILPNTAGCQTAKDAILTAELAREALETDWVKLEVIGDRELLYPNVEELLKATEELVNRGFVVLPYCNDDPVTCQKLADLGAATVMPLGSMIGTGLGIANPHMIELICARSPVPVVLDAGIGTASDAAQAMELGCAAVLLNTAVSKAHDPVRMARAFRYAVEGGRLARLAGRIPKKLHAEASSPEFGLVGS.

Residue Lys-107 is the Schiff-base intermediate with DXP of the active site. 1-deoxy-D-xylulose 5-phosphate-binding positions include Gly-168, 194-195 (AG), and 216-217 (NT).

The protein belongs to the ThiG family. In terms of assembly, homotetramer. Forms heterodimers with either ThiH or ThiS.

Its subcellular location is the cytoplasm. The enzyme catalyses [ThiS sulfur-carrier protein]-C-terminal-Gly-aminoethanethioate + 2-iminoacetate + 1-deoxy-D-xylulose 5-phosphate = [ThiS sulfur-carrier protein]-C-terminal Gly-Gly + 2-[(2R,5Z)-2-carboxy-4-methylthiazol-5(2H)-ylidene]ethyl phosphate + 2 H2O + H(+). The protein operates within cofactor biosynthesis; thiamine diphosphate biosynthesis. Functionally, catalyzes the rearrangement of 1-deoxy-D-xylulose 5-phosphate (DXP) to produce the thiazole phosphate moiety of thiamine. Sulfur is provided by the thiocarboxylate moiety of the carrier protein ThiS. In vitro, sulfur can be provided by H(2)S. This Azorhizobium caulinodans (strain ATCC 43989 / DSM 5975 / JCM 20966 / LMG 6465 / NBRC 14845 / NCIMB 13405 / ORS 571) protein is Thiazole synthase.